The following is a 114-amino-acid chain: Pancreatic progenitor cell differentiation and proliferation factor (114 aa).

Position 9 is a phosphoserine (Ser-9). Disordered stretches follow at residues 22 to 47 (GSTSSNSSCSSTECPGEAIPHPPGLP) and 75 to 114 (AEHSEPPQASSSMTACGLARDAPRKQPGGQSSTASAGPPS). Low complexity predominate over residues 23–33 (STSSNSSCSST). The segment covering 102–114 (GGQSSTASAGPPS) has biased composition (polar residues).

The protein belongs to the PPDPF family.

In terms of biological role, probable regulator of exocrine pancreas development. This Homo sapiens (Human) protein is Pancreatic progenitor cell differentiation and proliferation factor (PPDPF).